We begin with the raw amino-acid sequence, 638 residues long: Phosphomethylpyrimidine synthase (638 aa).

Substrate is bound by residues N236, M265, Y294, H330, 350–352 (SRG), 391–394 (DGLR), and E430. A Zn(2+)-binding site is contributed by H434. Y457 lines the substrate pocket. Residue H498 coordinates Zn(2+). Residues C578, C581, and C586 each coordinate [4Fe-4S] cluster.

The protein belongs to the ThiC family. As to quaternary structure, homodimer. [4Fe-4S] cluster is required as a cofactor.

It carries out the reaction 5-amino-1-(5-phospho-beta-D-ribosyl)imidazole + S-adenosyl-L-methionine = 4-amino-2-methyl-5-(phosphooxymethyl)pyrimidine + CO + 5'-deoxyadenosine + formate + L-methionine + 3 H(+). The protein operates within cofactor biosynthesis; thiamine diphosphate biosynthesis. In terms of biological role, catalyzes the synthesis of the hydroxymethylpyrimidine phosphate (HMP-P) moiety of thiamine from aminoimidazole ribotide (AIR) in a radical S-adenosyl-L-methionine (SAM)-dependent reaction. This Polaromonas sp. (strain JS666 / ATCC BAA-500) protein is Phosphomethylpyrimidine synthase.